The sequence spans 608 residues: Pentatricopeptide repeat-containing protein At5g40410, mitochondrial (608 aa).

Residues 1–28 (MIKANVYSCSKFRFLYRRRFLSQSSFVH) constitute a mitochondrion transit peptide. PPR repeat units follow at residues 30–64 (LDAN…VSYR), 65–95 (HGFI…MPER), 96–130 (DLVS…EVGF), 133–167 (NEVT…GVLE), 168–198 (EVKV…LSIK), 199–233 (NLVS…GHEP), 234–268 (DQAT…GFSG), 269–299 (NKCI…ITSP), 300–334 (DSMA…GISP), 335–365 (DHVT…MSKR), and 371–401 (RLDH…MPME). The interval 406–481 (VWGALLGACR…ASGCSYIEHG (76 aa)) is type E motif. The segment at 482–512 (NKIHKFVVGDWSHPESEKIQKKLKEIRKKMK) is type E(+) motif. Positions 514 to 608 (EMGYKSKTEF…DGSCSCSDYW (95 aa)) are type DYW motif.

This sequence belongs to the PPR family. PCMP-H subfamily.

It localises to the mitochondrion. The sequence is that of Pentatricopeptide repeat-containing protein At5g40410, mitochondrial (PCMP-H15) from Arabidopsis thaliana (Mouse-ear cress).